The chain runs to 433 residues: 3-phosphoshikimate 1-carboxyvinyltransferase (433 aa).

Lys-15, Ser-16, and Arg-20 together coordinate 3-phosphoshikimate. Lys-15 contributes to the phosphoenolpyruvate binding site. The phosphoenolpyruvate site is built by Gly-96 and Arg-124. Ser-169, Gln-171, Ser-195, Asp-318, and Lys-345 together coordinate 3-phosphoshikimate. Gln-171 is a binding site for phosphoenolpyruvate. Asp-318 acts as the Proton acceptor in catalysis. Residues Arg-349 and Arg-393 each contribute to the phosphoenolpyruvate site.

The protein belongs to the EPSP synthase family. Monomer.

It is found in the cytoplasm. It catalyses the reaction 3-phosphoshikimate + phosphoenolpyruvate = 5-O-(1-carboxyvinyl)-3-phosphoshikimate + phosphate. It participates in metabolic intermediate biosynthesis; chorismate biosynthesis; chorismate from D-erythrose 4-phosphate and phosphoenolpyruvate: step 6/7. Its function is as follows. Catalyzes the transfer of the enolpyruvyl moiety of phosphoenolpyruvate (PEP) to the 5-hydroxyl of shikimate-3-phosphate (S3P) to produce enolpyruvyl shikimate-3-phosphate and inorganic phosphate. The protein is 3-phosphoshikimate 1-carboxyvinyltransferase of Pelodictyon phaeoclathratiforme (strain DSM 5477 / BU-1).